Here is a 91-residue protein sequence, read N- to C-terminus: Putative regulatory protein PTH_1796 (91 aa).

The protein belongs to the RemA family.

This is Putative regulatory protein PTH_1796 from Pelotomaculum thermopropionicum (strain DSM 13744 / JCM 10971 / SI).